The following is a 149-amino-acid chain: Large ribosomal subunit protein bL9 (149 aa).

It belongs to the bacterial ribosomal protein bL9 family.

Its function is as follows. Binds to the 23S rRNA. The chain is Large ribosomal subunit protein bL9 from Enterobacter sp. (strain 638).